The primary structure comprises 150 residues: Small ribosomal subunit protein uS19y (150 aa).

Belongs to the universal ribosomal protein uS19 family.

Its subcellular location is the cytoplasm. The polypeptide is Small ribosomal subunit protein uS19y (RPS15C) (Arabidopsis thaliana (Mouse-ear cress)).